A 506-amino-acid chain; its full sequence is bZIP transcription factor TGA10 (506 aa).

Disordered regions lie at residues 22-50 (VSYM…HQHH) and 113-218 (PSSI…KTLR). Composition is skewed to polar residues over residues 25–45 (MDSS…SFGG), 113–124 (PSSIQEQRQNSG), 142–152 (PSTTNKMNTGL), and 160–180 (SKRS…NDAP). The span at 207 to 216 (DAPKTPDPKT) shows a compositional bias: basic and acidic residues. Positions 213–257 (DPKTLRRLAQNREAARKSRLRKKAYVQQLESSRIRLTQLEQELQR) constitute a bZIP domain. The interval 215–235 (KTLRRLAQNREAARKSRLRKK) is basic motif. The Nuclear localization signal signature appears at 217-224 (LRRLAQNR). A leucine-zipper region spans residues 241–255 (LESSRIRLTQLEQEL). A DOG1 domain is found at 288–502 (AAVFDMEYAR…RALSSLWHAR (215 aa)).

Belongs to the bZIP family. As to quaternary structure, binds DNA as a dimer. Interacts with TGA2.2. In terms of tissue distribution, specifically expressed in roots.

It is found in the nucleus. Functionally, transcription activator that binds to as1-like elements (5'-TGACGTAAgggaTGACGCA-3') in promoters of target genes. Regulates transcription in response to plant signaling molecules salicylic acid (SA), methyl jasmonate (MJ) and auxin (2,4D) only in leaves. Prevents lateral branching and may repress defense signaling. The polypeptide is bZIP transcription factor TGA10 (Nicotiana tabacum (Common tobacco)).